The following is a 146-amino-acid chain: MHLLLLNGPNLNLLGQREPGIYGSGTLASIEDGLRQEATAAGAVLECFQSNFEGALVERIHQAIGASQGILINAGAFTHTSIALRDALLGVAIPYVELHLSNTHAREPFRHRSYLADRAVGVVSGFGAMSYSLALQGLIDHLRQNG.

Tyrosine 22 functions as the Proton acceptor in the catalytic mechanism. Substrate is bound by residues asparagine 73, histidine 79, and aspartate 86. Histidine 99 acts as the Proton donor in catalysis. Substrate contacts are provided by residues 100–101 (LS) and arginine 110.

It belongs to the type-II 3-dehydroquinase family. As to quaternary structure, homododecamer.

The catalysed reaction is 3-dehydroquinate = 3-dehydroshikimate + H2O. The protein operates within metabolic intermediate biosynthesis; chorismate biosynthesis; chorismate from D-erythrose 4-phosphate and phosphoenolpyruvate: step 3/7. Its function is as follows. Catalyzes a trans-dehydration via an enolate intermediate. This Parasynechococcus marenigrum (strain WH8102) protein is 3-dehydroquinate dehydratase.